The sequence spans 108 residues: Con-Ins K1 (108 aa).

The signal sequence occupies residues 1–24 (MTTSSYFLLVALGLLLYVCQSSFG). Positions 25 to 28 (SPHT) are excised as a propeptide. Cystine bridges form between Cys-41–Cys-90, Cys-53–Cys-103, and Cys-89–Cys-94. Glu-44 bears the 4-carboxyglutamate mark. A propeptide spans 57-83 (RKRRGFPSMLKARAKRNEAFLLQRDGR) (c peptide). Glu-87 bears the 4-carboxyglutamate mark. A Glutamine amide modification is found at Gln-107.

This sequence belongs to the insulin family. In terms of assembly, heterodimer of A and B chains; disulfide-linked. In terms of tissue distribution, expressed by the venom gland.

The protein localises to the secreted. Its function is as follows. This venom insulin, from a fish-hunting cone snail, facilitates prey capture by rapidly inducing hypoglycemic shock. It is one of the smallest known insulin found in nature and lacks the C-terminal segment of the B chain that, in human insulin, mediates engagement of the insulin receptor (INSR) and assembly of the hormone's hexameric storage form. Despite lacking this segment, it both binds and activates human insulin receptor (long isoform (HIR-B)) with a moderate potency (EC(50)=30.45 nM). In vivo, intraperitoneal injection of this peptide into zebrafish lowers blood glucose with a lower potency than human insulin. In addition, when applied to water, this peptide reduces overall locomotor activity of zebrafish larvae, observed as a significant decrease in the percentage of time spent swimming and movement frequency. When tested on a mouse model of diabetes, this insulin also lowers blood glucose with a 20-fold lower potency than human insulin. The chain is Con-Ins K1 from Conus kinoshitai (Kinoshita's cone).